The chain runs to 82 residues: Sec-independent protein translocase protein TatA (82 aa).

A helical transmembrane segment spans residues Met-1–Gly-21. The disordered stretch occupies residues Gly-46–Ser-82. The span at Thr-49–Ala-67 shows a compositional bias: polar residues. A compositionally biased stretch (basic and acidic residues) spans Thr-72–Ser-82.

The protein belongs to the TatA/E family. In terms of assembly, the Tat system comprises two distinct complexes: a TatABC complex, containing multiple copies of TatA, TatB and TatC subunits, and a separate TatA complex, containing only TatA subunits. Substrates initially bind to the TatABC complex, which probably triggers association of the separate TatA complex to form the active translocon.

Its subcellular location is the cell inner membrane. Functionally, part of the twin-arginine translocation (Tat) system that transports large folded proteins containing a characteristic twin-arginine motif in their signal peptide across membranes. TatA could form the protein-conducting channel of the Tat system. In Acidovorax ebreus (strain TPSY) (Diaphorobacter sp. (strain TPSY)), this protein is Sec-independent protein translocase protein TatA.